The chain runs to 127 residues: Snaclec CHH-B subunit alpha (127 aa).

3 cysteine pairs are disulfide-bonded: Cys4–Cys15, Cys32–Cys120, and Cys95–Cys112. A C-type lectin domain is found at 11–121 (YDRYCYKPFK…CEQQHSFICK (111 aa)).

It belongs to the snaclec family. As to quaternary structure, heterodimer of subunits alpha and beta; disulfide-linked. Expressed by the venom gland.

Its subcellular location is the secreted. In terms of biological role, binds to the subunit GPIbalpha (GP1BA) of the platelet GPIb/V/IX receptor system. It inhibits ristocetin- and vWF-induced platelet aggregation in platelet-rich plasma by inhibiting the binding of vWF to GPIbalpha. The protein is Snaclec CHH-B subunit alpha of Crotalus horridus (Timber rattlesnake).